The following is a 501-amino-acid chain: Cytochrome P450 2J5 (501 aa).

C447 contacts heme.

The protein belongs to the cytochrome P450 family. Heme serves as cofactor.

The protein localises to the endoplasmic reticulum membrane. Its subcellular location is the microsome membrane. It catalyses the reaction an organic molecule + reduced [NADPH--hemoprotein reductase] + O2 = an alcohol + oxidized [NADPH--hemoprotein reductase] + H2O + H(+). The polypeptide is Cytochrome P450 2J5 (Cyp2j5) (Mus musculus (Mouse)).